The sequence spans 59 residues: Large ribosomal subunit protein uL30 (59 aa).

It belongs to the universal ribosomal protein uL30 family. As to quaternary structure, part of the 50S ribosomal subunit.

The protein is Large ribosomal subunit protein uL30 of Yersinia pseudotuberculosis serotype I (strain IP32953).